The chain runs to 664 residues: UV-stimulated scaffold protein A homolog (664 aa).

The interval 10–153 is VHS-like; the sequence is KVIGLIEKAT…LKNTLKLKFP (144 aa). The stretch at 148–180 forms a coiled coil; the sequence is LKLKFPDLQANAARIQRERQEREMKTKEILRNK. Disordered regions lie at residues 330-350 and 362-403; these read HGNE…DGKV and MRTQ…GNSL. Acidic residues predominate over residues 334 to 347; the sequence is ETNEEEEDIWEEDD. Residues 363 to 374 show a composition bias toward polar residues; that stretch reads RTQQSENSSLPS. Residues 377-387 show a composition bias toward basic and acidic residues; sequence EAKKSTSEARS. Residues 388–402 show a composition bias toward polar residues; it reads NKVSNTKKVGSSGNS. The segment at 473–500 adopts a UVSSA-type zinc-finger fold; the sequence is TPPCRASLKKGGLCQRRDLRVCPFHGPI. 4 residues coordinate Zn(2+): C476, C486, C494, and H497. Disordered regions lie at residues 514 to 546 and 640 to 664; these read SPLD…DPNQ and VKGT…ANQW. Composition is skewed to polar residues over residues 521-533 and 640-650; these read NQTS…NQDV and VKGTNPQQLAQ.

Belongs to the UVSSA family.

It localises to the chromosome. In Arabidopsis thaliana (Mouse-ear cress), this protein is UV-stimulated scaffold protein A homolog.